A 530-amino-acid polypeptide reads, in one-letter code: Amidase FVEG_08295 (530 aa).

Catalysis depends on charge relay system residues Lys138 and Ser214. Substrate-binding positions include Ser214 and Ile235–Ser238. Ser238 functions as the Acyl-ester intermediate in the catalytic mechanism.

The protein belongs to the amidase family.

The catalysed reaction is a monocarboxylic acid amide + H2O = a monocarboxylate + NH4(+). It functions in the pathway xenobiotic degradation. Functionally, amidase; part of the Fusarium detoxification of benzoxazolinone cluster 1 (FDB1) involved in the degradation of benzoxazolinones produced by the host plant. Maize, wheat, and rye produce the 2 benzoxazinone phytoanticipins 2,4-dihy-droxy-7-methoxy-1,4-benzoxazin-3-one (DIMBOA) and 2,4-dihydroxy-1,4-benzoxazin-3-one (DIBOA) that, due to their inherent instability once released, spontaneously degrade to the more stable corresponding benzoxazolinones, 6-methoxy-2-benzoxazolinone (MBOA) and 2-benzoxazolinone (BOA), respectively. The first step in the detoxification of benzoxazolinones involves the hydrolysis of the cyclic ester bond of benzoxazolinones by the FDB1 cluster gamma-lactamase MBL1 to aminophenols. MBL1 is able to convert BOA into 2-aminophenol (2-AP), as well as MBOA into 5-methoxy-2-aminophenol (2-AMP). The FDB2 cluster N-malonyltransferase FDB2/NAT1 then metabolizes aminophenols via N-malonylation to non-toxic malonamic acids. FDB2/NAT1 converts 2-AP into N-(2-hydroxyphenyl) malonamic acid (HPMA) and 2-AMP into N-(2-hydroxy-4-methoxyphenyl) malonamic acid (HMPMA). The duplicated dienlactone hydrolases DLH1 and DLH2 may provide redundant function for hydrolyzing the lactone moiety in the BOA molecule. The roles of the amidases an other enzymes encoded by the 2 FDB clusters have not been identified so far. The protein is Amidase FVEG_08295 of Gibberella moniliformis (strain M3125 / FGSC 7600) (Maize ear and stalk rot fungus).